The primary structure comprises 496 residues: Sporulation-killing factor biosynthesis protein SkfC (496 aa).

The next 7 membrane-spanning stretches (helical) occupy residues 1–21 (MNSL…LLFI), 224–244 (VSGM…LVFM), 248–268 (TSII…SLTL), 291–311 (LLGI…VFIC), 331–351 (IVQI…TSLL), 399–419 (LLMI…IIVS), and 443–463 (FIFG…CVLV).

Its subcellular location is the membrane. Functionally, required for production of the bacteriocin SkfA. The chain is Sporulation-killing factor biosynthesis protein SkfC from Bacillus subtilis (strain 168).